Reading from the N-terminus, the 142-residue chain is Large ribosomal subunit protein uL11 (142 aa).

This sequence belongs to the universal ribosomal protein uL11 family. In terms of assembly, part of the ribosomal stalk of the 50S ribosomal subunit. Interacts with L10 and the large rRNA to form the base of the stalk. L10 forms an elongated spine to which L12 dimers bind in a sequential fashion forming a multimeric L10(L12)X complex. One or more lysine residues are methylated.

In terms of biological role, forms part of the ribosomal stalk which helps the ribosome interact with GTP-bound translation factors. The chain is Large ribosomal subunit protein uL11 from Mycolicibacterium gilvum (strain PYR-GCK) (Mycobacterium gilvum (strain PYR-GCK)).